Reading from the N-terminus, the 406-residue chain is Phosphopentomutase (406 aa).

Residues D10, D305, H310, D346, H347, and H358 each coordinate Mn(2+).

This sequence belongs to the phosphopentomutase family. The cofactor is Mn(2+).

Its subcellular location is the cytoplasm. The enzyme catalyses 2-deoxy-alpha-D-ribose 1-phosphate = 2-deoxy-D-ribose 5-phosphate. It carries out the reaction alpha-D-ribose 1-phosphate = D-ribose 5-phosphate. It functions in the pathway carbohydrate degradation; 2-deoxy-D-ribose 1-phosphate degradation; D-glyceraldehyde 3-phosphate and acetaldehyde from 2-deoxy-alpha-D-ribose 1-phosphate: step 1/2. In terms of biological role, isomerase that catalyzes the conversion of deoxy-ribose 1-phosphate (dRib-1-P) and ribose 1-phosphate (Rib-1-P) to deoxy-ribose 5-phosphate (dRib-5-P) and ribose 5-phosphate (Rib-5-P), respectively. This is Phosphopentomutase from Methylobacterium radiotolerans (strain ATCC 27329 / DSM 1819 / JCM 2831 / NBRC 15690 / NCIMB 10815 / 0-1).